Here is a 387-residue protein sequence, read N- to C-terminus: Carbamoyl phosphate synthase small chain (387 aa).

The interval 1–189 is CPSase; the sequence is MIKSAILVLE…GLPEDKQEQD (189 aa). L-glutamine-binding residues include Ser-47, Gly-241, and Gly-243. Positions 193 to 380 constitute a Glutamine amidotransferase type-1 domain; that stretch reads HVVAYDFGAK…IELIEQYCQK (188 aa). Residue Cys-269 is the Nucleophile of the active site. The L-glutamine site is built by Leu-270, Gln-273, Asn-311, Gly-313, and Phe-314. Active-site residues include His-353 and Glu-355.

The protein belongs to the CarA family. As to quaternary structure, composed of two chains; the small (or glutamine) chain promotes the hydrolysis of glutamine to ammonia, which is used by the large (or ammonia) chain to synthesize carbamoyl phosphate. Tetramer of heterodimers (alpha,beta)4.

The catalysed reaction is hydrogencarbonate + L-glutamine + 2 ATP + H2O = carbamoyl phosphate + L-glutamate + 2 ADP + phosphate + 2 H(+). It carries out the reaction L-glutamine + H2O = L-glutamate + NH4(+). The protein operates within amino-acid biosynthesis; L-arginine biosynthesis; carbamoyl phosphate from bicarbonate: step 1/1. It participates in pyrimidine metabolism; UMP biosynthesis via de novo pathway; (S)-dihydroorotate from bicarbonate: step 1/3. In terms of biological role, small subunit of the glutamine-dependent carbamoyl phosphate synthetase (CPSase). CPSase catalyzes the formation of carbamoyl phosphate from the ammonia moiety of glutamine, carbonate, and phosphate donated by ATP, constituting the first step of 2 biosynthetic pathways, one leading to arginine and/or urea and the other to pyrimidine nucleotides. The small subunit (glutamine amidotransferase) binds and cleaves glutamine to supply the large subunit with the substrate ammonia. This is Carbamoyl phosphate synthase small chain from Photorhabdus laumondii subsp. laumondii (strain DSM 15139 / CIP 105565 / TT01) (Photorhabdus luminescens subsp. laumondii).